The following is a 224-amino-acid chain: Artemin (224 aa).

The first 39 residues, 1 to 39, serve as a signal peptide directing secretion; sequence MELGLAEPTALSHCLRPRWQSAWWPTLAVLALLSCVTEA. Residues 40-111 constitute a propeptide that is removed on maturation; that stretch reads SLDPMSRSPA…AALRGARAAR (72 aa). The segment at 43–124 is disordered; sequence PMSRSPAARD…RSSRARTTDA (82 aa). The segment covering 80 to 95 has biased composition (pro residues); the sequence is RPPPQSPQPAPPPPGP. Residues 96 to 116 show a composition bias toward low complexity; it reads ALQSPPAALRGARAARAGTRS. 3 cysteine pairs are disulfide-bonded: cysteine 127–cysteine 192, cysteine 154–cysteine 220, and cysteine 158–cysteine 222. N-linked (GlcNAc...) asparagine glycosylation occurs at asparagine 206.

It belongs to the TGF-beta family. GDNF subfamily. As to quaternary structure, homodimer; disulfide-linked. Interacts with GFRA3 coreceptor and RET: forms a 2:2:2 ternary complex composed of ARTN ligand, GFRA3 and RET receptor.

Its subcellular location is the secreted. Its function is as follows. Growth factor that supports the survival of sensory and sympathetic peripheral neurons in culture and also supports the survival of dopaminergic neurons of the ventral mid-brain. Acts by binding to its coreceptor, GFRA3, leading to autophosphorylation and activation of the RET receptor. Strong attractant of gut hematopoietic cells thus promoting the formation Peyer's patch-like structures, a major component of the gut-associated lymphoid tissue. The protein is Artemin of Mus musculus (Mouse).